Consider the following 263-residue polypeptide: Ribonuclease HII (263 aa).

The RNase H type-2 domain maps to Gln-71–Asn-262. Residues Asp-77, Glu-78, and Asp-172 each contribute to the a divalent metal cation site.

This sequence belongs to the RNase HII family. Mn(2+) is required as a cofactor. Requires Mg(2+) as cofactor.

The protein localises to the cytoplasm. The enzyme catalyses Endonucleolytic cleavage to 5'-phosphomonoester.. Its function is as follows. Endonuclease that specifically degrades the RNA of RNA-DNA hybrids. This chain is Ribonuclease HII, found in Streptococcus pyogenes serotype M12 (strain MGAS2096).